A 195-amino-acid polypeptide reads, in one-letter code: FMN-dependent NADH:quinone oxidoreductase (195 aa).

FMN-binding positions include serine 9, 15 to 17, 85 to 88, and 129 to 132; these read SVS, MYNF, and SRGG.

Belongs to the azoreductase type 1 family. Homodimer. FMN is required as a cofactor.

It catalyses the reaction 2 a quinone + NADH + H(+) = 2 a 1,4-benzosemiquinone + NAD(+). The catalysed reaction is N,N-dimethyl-1,4-phenylenediamine + anthranilate + 2 NAD(+) = 2-(4-dimethylaminophenyl)diazenylbenzoate + 2 NADH + 2 H(+). In terms of biological role, quinone reductase that provides resistance to thiol-specific stress caused by electrophilic quinones. Its function is as follows. Also exhibits azoreductase activity. Catalyzes the reductive cleavage of the azo bond in aromatic azo compounds to the corresponding amines. This is FMN-dependent NADH:quinone oxidoreductase from Stenotrophomonas maltophilia (strain K279a).